A 645-amino-acid chain; its full sequence is Cell pattern formation-associated protein stuA (645 aa).

The tract at residues 1–52 (MNQMQPYADVHQPHMSTAAHAPASGPPAGLSHYSYPHQPSMMQPQQQQHQYG) is disordered. Positions 18–52 (AAHAPASGPPAGLSHYSYPHQPSMMQPQQQQHQYG) are enriched in low complexity. One can recognise an HTH APSES-type domain in the interval 124-230 (RVTATLWEDE…HDIGALLYHP (107 aa)). A DNA-binding region (H-T-H motif) is located at residues 158–179 (GTKLLNVAGMTRGRRDGILKSE). The segment at 246 to 645 (VDRNRRPDSM…HTLAAQRARR (400 aa)) is disordered. Polar residues-rich tracts occupy residues 254–271 (SMQT…SQAP) and 279–288 (MTNSVGSAMS). The segment covering 317 to 330 (SASSMMGMGNQGSS) has biased composition (low complexity). Residues 336 to 365 (ANVQQHPQGNQPLSIDTGLSNARSVPTTPA) are compositionally biased toward polar residues. Positions 469 to 481 (PYNGNRGPYGYNP) are enriched in low complexity. 2 stretches are compositionally biased toward polar residues: residues 502–542 (SPHQ…NLYN) and 569–584 (YASQ…NSSG). The interval 585–613 (KRGRDEEDAETYRPDSVQGDDMGGLKRRK) is nuclear localization domain. Basic and acidic residues predominate over residues 586-597 (RGRDEEDAETYR).

The protein belongs to the EFG1/PHD1/stuA family.

It is found in the nucleus. Transcription factor that regulates asexual reproduction. Binds the StuA-response elements (StRE) with the consensus sequence 5'-(A/T)CGCG(T/A)N(A/C)-3' at the promoters of target genes. Regulates the expression of several effector genes (AvrLm1, AvrLm6 and AvrLm4-7) during infection stage. The sequence is that of Cell pattern formation-associated protein stuA from Leptosphaeria maculans (strain JN3 / isolate v23.1.3 / race Av1-4-5-6-7-8) (Blackleg fungus).